We begin with the raw amino-acid sequence, 206 residues long: Ras-related protein Rab-14 (206 aa).

Position 15-22 (15-22) interacts with GTP; it reads GDMGVGKS. The short motif at 37–45 is the Effector region element; it reads SPHTIGVEF. GTP contacts are provided by residues 63–67 and 121–124; these read DTAGQ and NKKD. The tract at residues 182-206 is disordered; it reads PDGGITKNPPQTITDKPQDASKCSC. Residues 189–206 are compositionally biased toward polar residues; sequence NPPQTITDKPQDASKCSC. 2 S-geranylgeranyl cysteine lipidation sites follow: Cys-204 and Cys-206. Cysteine methyl ester is present on Cys-206.

This sequence belongs to the small GTPase superfamily. Rab family.

The protein resides in the endosome. It is found in the contractile vacuole. The protein localises to the membrane. It catalyses the reaction GTP + H2O = GDP + phosphate + H(+). Its activity is regulated as follows. Rab activation is generally mediated by a guanine exchange factor (GEF), while inactivation through hydrolysis of bound GTP is catalyzed by a GTPase activating protein (GAP). That Rab is activated by the DENND6A and DENND6B guanine exchange factors (GEF). The small GTPases Rab are key regulators of intracellular membrane trafficking, from the formation of transport vesicles to their fusion with membranes. Rabs cycle between an inactive GDP-bound form and an active GTP-bound form that is able to recruit to membranes different set of downstream effectors directly responsible for vesicle formation, movement, tethering and fusion. Regulates the fusion of phagosomes and lysosomes. The sequence is that of Ras-related protein Rab-14 (rab14) from Dictyostelium discoideum (Social amoeba).